A 125-amino-acid polypeptide reads, in one-letter code: Large ribosomal subunit protein bL12 (125 aa).

The protein belongs to the bacterial ribosomal protein bL12 family. Homodimer. Part of the ribosomal stalk of the 50S ribosomal subunit. Forms a multimeric L10(L12)X complex, where L10 forms an elongated spine to which 2 to 4 L12 dimers bind in a sequential fashion. Binds GTP-bound translation factors.

In terms of biological role, forms part of the ribosomal stalk which helps the ribosome interact with GTP-bound translation factors. Is thus essential for accurate translation. The polypeptide is Large ribosomal subunit protein bL12 (Rickettsia prowazekii (strain Madrid E)).